The following is a 381-amino-acid chain: Creatine kinase M-type (381 aa).

The 88-residue stretch at 11–98 folds into the Phosphagen kinase N-terminal domain; the sequence is KLNYSAAEEF…FDPVIEDRHG (88 aa). One can recognise a Phosphagen kinase C-terminal domain in the interval 125 to 367; it reads YVLSSRVRTG…KLMVEMEKRL (243 aa). ATP is bound by residues 128 to 132, His191, Arg236, Arg292, 320 to 325, and Asp335; these read SSRVR and RGTGGV.

This sequence belongs to the ATP:guanido phosphotransferase family. Dimer of identical or non-identical chains. With MM being the major form in skeletal muscle and myocardium, MB existing in myocardium, and BB existing in many tissues, especially brain.

It localises to the cytoplasm. It catalyses the reaction creatine + ATP = N-phosphocreatine + ADP + H(+). Reversibly catalyzes the transfer of phosphate between ATP and various phosphogens (e.g. creatine phosphate). Creatine kinase isoenzymes play a central role in energy transduction in tissues with large, fluctuating energy demands, such as skeletal muscle, heart, brain and spermatozoa. This Tetronarce californica (Pacific electric ray) protein is Creatine kinase M-type.